Here is a 161-residue protein sequence, read N- to C-terminus: Phosphopantetheine adenylyltransferase (161 aa).

Serine 11 is a substrate binding site. Residues 11 to 12 (SF) and histidine 19 contribute to the ATP site. Residues lysine 43, leucine 75, and arginine 89 each coordinate substrate. ATP contacts are provided by residues 90–92 (GLR), glutamate 100, and 125–131 (YSYLSSS).

The protein belongs to the bacterial CoaD family. In terms of assembly, homohexamer. The cofactor is Mg(2+).

It localises to the cytoplasm. It catalyses the reaction (R)-4'-phosphopantetheine + ATP + H(+) = 3'-dephospho-CoA + diphosphate. It participates in cofactor biosynthesis; coenzyme A biosynthesis; CoA from (R)-pantothenate: step 4/5. Reversibly transfers an adenylyl group from ATP to 4'-phosphopantetheine, yielding dephospho-CoA (dPCoA) and pyrophosphate. This Citrifermentans bemidjiense (strain ATCC BAA-1014 / DSM 16622 / JCM 12645 / Bem) (Geobacter bemidjiensis) protein is Phosphopantetheine adenylyltransferase.